We begin with the raw amino-acid sequence, 313 residues long: tRNA pseudouridine synthase B (313 aa).

D48 functions as the Nucleophile in the catalytic mechanism.

It belongs to the pseudouridine synthase TruB family. Type 1 subfamily.

The enzyme catalyses uridine(55) in tRNA = pseudouridine(55) in tRNA. Functionally, responsible for synthesis of pseudouridine from uracil-55 in the psi GC loop of transfer RNAs. The protein is tRNA pseudouridine synthase B of Saccharophagus degradans (strain 2-40 / ATCC 43961 / DSM 17024).